A 380-amino-acid polypeptide reads, in one-letter code: Nucleoporin Nup43 (380 aa).

Met-1 carries the N-acetylmethionine modification. 6 WD repeats span residues 8–57 (FVSQ…NLDS), 72–110 (RHHG…QTLS), 127–166 (PSYS…AVRT), 170–208 (ADSS…NEPS), 215–255 (GDRV…MPVS), and 259–299 (AHEA…PEKS).

In terms of assembly, component of the Nup107-160 subcomplex of the nuclear pore complex (NPC). The Nup107-160 subcomplex includes NUP160, NUP133, NUP107, NUP98, NUP85, NUP43, NUP37, SEH1 and SEC13.

The protein localises to the chromosome. The protein resides in the centromere. Its subcellular location is the kinetochore. It localises to the nucleus. It is found in the nuclear pore complex. In terms of biological role, component of the Nup107-160 subcomplex of the nuclear pore complex (NPC). The Nup107-160 subcomplex is required for the assembly of a functional NPC. The Nup107-160 subcomplex is also required for normal kinetochore microtubule attachment, mitotic progression and chromosome segregation. This is Nucleoporin Nup43 (NUP43) from Homo sapiens (Human).